The primary structure comprises 182 residues: Protein Syd (182 aa).

Belongs to the Syd family.

It is found in the cell inner membrane. Its function is as follows. Interacts with the SecY protein in vivo. May bind preferentially to an uncomplexed state of SecY, thus functioning either as a chelating agent for excess SecY in the cell or as a regulatory factor that negatively controls the translocase function. In Pectobacterium atrosepticum (strain SCRI 1043 / ATCC BAA-672) (Erwinia carotovora subsp. atroseptica), this protein is Protein Syd.